We begin with the raw amino-acid sequence, 238 residues long: Serine protease SplE (238 aa).

Residues 1–36 (MNKNIIIKSIAALTILTSVTGVGTTVVEGIQQTAKA) form the signal peptide. Active-site charge relay system residues include His-75, Asp-113, and Ser-191.

It belongs to the peptidase S1B family.

It localises to the secreted. In Staphylococcus aureus (strain USA300), this protein is Serine protease SplE (splE).